A 103-amino-acid polypeptide reads, in one-letter code: MHVKKGDKVKVITGKDKGKSGKVLAAFPKKDRVLIEGINMVKKHTKPSNVNPQGGILNVEAPIHVSNVMLIDPKTGEPTRVGYEVKGDKKVRVAKKSGEVIDK.

The protein belongs to the universal ribosomal protein uL24 family. Part of the 50S ribosomal subunit.

One of two assembly initiator proteins, it binds directly to the 5'-end of the 23S rRNA, where it nucleates assembly of the 50S subunit. Its function is as follows. One of the proteins that surrounds the polypeptide exit tunnel on the outside of the subunit. This Listeria monocytogenes serotype 4a (strain HCC23) protein is Large ribosomal subunit protein uL24.